Here is a 331-residue protein sequence, read N- to C-terminus: Fructose-1,6-bisphosphatase class 1 2 (331 aa).

The Mg(2+) site is built by Glu91, Asp112, Leu114, and Asp115. Substrate is bound by residues 115 to 118 (DGSS), Asn207, Tyr238, and Lys268. Glu274 contributes to the Mg(2+) binding site.

The protein belongs to the FBPase class 1 family. Homotetramer. The cofactor is Mg(2+).

It is found in the cytoplasm. The catalysed reaction is beta-D-fructose 1,6-bisphosphate + H2O = beta-D-fructose 6-phosphate + phosphate. The protein operates within carbohydrate biosynthesis; Calvin cycle. The chain is Fructose-1,6-bisphosphatase class 1 2 from Acaryochloris marina (strain MBIC 11017).